Here is a 182-residue protein sequence, read N- to C-terminus: Isopentenyl-diphosphate Delta-isomerase (182 aa).

Residues His-23 and His-30 each coordinate Mn(2+). The Nudix hydrolase domain occupies 28–162 (PRHLAFSCHV…PWAFSPWLVE (135 aa)). Residue Cys-65 is part of the active site. Residue Cys-65 participates in Mg(2+) binding. His-67 contributes to the Mn(2+) binding site. Glu-85 provides a ligand contact to Mg(2+). Mn(2+) is bound by residues Glu-112 and Glu-114. Residue Glu-114 is part of the active site.

Belongs to the IPP isomerase type 1 family. Requires Mg(2+) as cofactor. Mn(2+) is required as a cofactor.

It localises to the cytoplasm. The enzyme catalyses isopentenyl diphosphate = dimethylallyl diphosphate. It participates in isoprenoid biosynthesis; dimethylallyl diphosphate biosynthesis; dimethylallyl diphosphate from isopentenyl diphosphate: step 1/1. Catalyzes the 1,3-allylic rearrangement of the homoallylic substrate isopentenyl (IPP) to its highly electrophilic allylic isomer, dimethylallyl diphosphate (DMAPP). This is Isopentenyl-diphosphate Delta-isomerase from Brevibacterium linens.